A 396-amino-acid chain; its full sequence is Tryptophan synthase beta chain (396 aa).

The residue at position 86 (K86) is an N6-(pyridoxal phosphate)lysine.

It belongs to the TrpB family. Tetramer of two alpha and two beta chains. Pyridoxal 5'-phosphate is required as a cofactor.

It carries out the reaction (1S,2R)-1-C-(indol-3-yl)glycerol 3-phosphate + L-serine = D-glyceraldehyde 3-phosphate + L-tryptophan + H2O. The protein operates within amino-acid biosynthesis; L-tryptophan biosynthesis; L-tryptophan from chorismate: step 5/5. Functionally, the beta subunit is responsible for the synthesis of L-tryptophan from indole and L-serine. The polypeptide is Tryptophan synthase beta chain (Pectobacterium atrosepticum (strain SCRI 1043 / ATCC BAA-672) (Erwinia carotovora subsp. atroseptica)).